A 207-amino-acid polypeptide reads, in one-letter code: Small ribosomal subunit protein uS4 (207 aa).

The disordered stretch occupies residues 31–53 (KAKFDSKPGQHGRTSGARTSDFG). Residues 97–157 (SRLDNVVYRM…EKSKKQARIV (61 aa)) enclose the S4 RNA-binding domain.

It belongs to the universal ribosomal protein uS4 family. Part of the 30S ribosomal subunit. Contacts protein S5. The interaction surface between S4 and S5 is involved in control of translational fidelity.

In terms of biological role, one of the primary rRNA binding proteins, it binds directly to 16S rRNA where it nucleates assembly of the body of the 30S subunit. With S5 and S12 plays an important role in translational accuracy. This chain is Small ribosomal subunit protein uS4, found in Paracidovorax citrulli (strain AAC00-1) (Acidovorax citrulli).